The chain runs to 399 residues: MAKEKFVKTKPHVNIGTIGHVDHGKTTLTAAITAVLAEKGYAEKRDYDQIDNAPEERERGITIATSHVEYETDKRHYAHVDCPGHADYVKNMITGAAQMDGAILVVSAADGPMPQTREHILLARQVGVPYIVVFLNKEDMVDDPELLELVEMEVRELLNEYDFPGDDVPVIAGSALKALEEAKEGKLGEWSEKILKLMEAVDEYIPTPERDIDKPFLMPIEDVFSISGRGTVVTGRIERGVVKVGDEIEIVGLRPTQKTTVTGVEMFRKELDQGEAGDNVGVLLRGTKKEEVERGQVLAQPGTITPHTKFEAEIYVLTKEEGGRHTPFFSGYRPQFYVRTTDVTGTITLPEGVEMVMPGDNVKINAELIAPIALEEGTRFAIREGGRTVGAGVVSKIIE.

In terms of domain architecture, tr-type G spans 10–209 (KPHVNIGTIG…AVDEYIPTPE (200 aa)). The segment at 19-26 (GHVDHGKT) is G1. 19-26 (GHVDHGKT) is a binding site for GTP. T26 serves as a coordination point for Mg(2+). The interval 60–64 (GITIA) is G2. A G3 region spans residues 81 to 84 (DCPG). GTP contacts are provided by residues 81 to 85 (DCPGH) and 136 to 139 (NKED). The interval 136–139 (NKED) is G4. A G5 region spans residues 174 to 176 (SAL).

It belongs to the TRAFAC class translation factor GTPase superfamily. Classic translation factor GTPase family. EF-Tu/EF-1A subfamily. In terms of assembly, monomer.

It localises to the cytoplasm. It catalyses the reaction GTP + H2O = GDP + phosphate + H(+). GTP hydrolase that promotes the GTP-dependent binding of aminoacyl-tRNA to the A-site of ribosomes during protein biosynthesis. This Nitratiruptor sp. (strain SB155-2) protein is Elongation factor Tu.